A 157-amino-acid polypeptide reads, in one-letter code: Peptide methionine sulfoxide reductase MsrA (157 aa).

Cys10 is an active-site residue.

This sequence belongs to the MsrA Met sulfoxide reductase family.

It catalyses the reaction L-methionyl-[protein] + [thioredoxin]-disulfide + H2O = L-methionyl-(S)-S-oxide-[protein] + [thioredoxin]-dithiol. The enzyme catalyses [thioredoxin]-disulfide + L-methionine + H2O = L-methionine (S)-S-oxide + [thioredoxin]-dithiol. In terms of biological role, has an important function as a repair enzyme for proteins that have been inactivated by oxidation. Catalyzes the reversible oxidation-reduction of methionine sulfoxide in proteins to methionine. The sequence is that of Peptide methionine sulfoxide reductase MsrA from Clostridium perfringens (strain ATCC 13124 / DSM 756 / JCM 1290 / NCIMB 6125 / NCTC 8237 / Type A).